Here is a 95-residue protein sequence, read N- to C-terminus: Small ribosomal subunit protein bS6 (95 aa).

It belongs to the bacterial ribosomal protein bS6 family.

Binds together with bS18 to 16S ribosomal RNA. In Corynebacterium efficiens (strain DSM 44549 / YS-314 / AJ 12310 / JCM 11189 / NBRC 100395), this protein is Small ribosomal subunit protein bS6.